The primary structure comprises 1002 residues: Vacuolar protein sorting-associated protein 18 homolog (1002 aa).

Position 344 is a phosphoserine (serine 344). The CHCR repeat unit spans residues 650-804 (LMAQGSRLEV…DIKGTNDVKK (155 aa)). Residues 827 to 880 (FEKIDNFKEAICDALRDYNQRIQELQREMAETTEQTDRVTAELQQLRQHSLTVE) adopt a coiled-coil conformation. The RING-type; degenerate zinc finger occupies 885-924 (CEICEMMLLVKPFFIFICGHKFHSDCLEKHVVPLLTKEQC).

The protein belongs to the VPS18 family. In terms of assembly, component of the class C core vacuole/endosome tethering (CORVET) complex composed of at least Vps8, dor/Vps18, car/Vps33A and Vps16A; unlike in other species, Vps11 is not part of the Drosophila complex. Due to the reduced number of components the Drosophila CORVET complex is often referred to as the miniCORVET complex. Interacts with car/Vps33A. Interacts with ema. Component of the homotypic fusion and vacuole protein sorting (HOPS) complex, composed of Vps16A, car/Vps33A, dor/Vps18, Vps39, Vps11 and lt/Vps41. The tethering complex core made up of Vps16A, car/Vps33A and dor/Vps18 and shared by both HOPS and CORVET, preferentially associates with CORVET-specific Vps8 over HOPS-specific lt/Vps41. Interacts with Syx17 (via SNARE domain); the interaction may involve multiple components of the HOPS complex and may promote assembly of the Syx17-Snap29-Vamp7 trans-SNARE complex.

It is found in the early endosome. Its subcellular location is the late endosome membrane. The protein localises to the lysosome membrane. The protein resides in the cytoplasmic vesicle. It localises to the autophagosome. Its function is as follows. Core component of the class C core vacuole/endosome tethering (CORVET) and the homotypic fusion and vacuole protein sorting (HOPS) tethering complexes involved in endo-lysosomal vesicle trafficking and lysosome biogenesis. The CORVET complex facilitates docking and fusion of endosomal vesicles during endosome maturation, acts upstream of HOPS, but is not involved in autophagic flux. The CORVET complex may cooperate with the early endosomal tether Rbsn-5 to mediate endosomal fusion. The HOPS complex facilitates docking and fusion of lysosomes with late endosomes and several other types of vesicles. The HOPS complex is also involved in autophagy and crinophagy (the elimination of unused secretory granules through their fusion with lysosomes). The HOPS complex mediates autophagocitic flux, probably by binding autophagosome-associated Syx17/syntaxin 17, promoting assembly of the trans-SNARE complex and instigating autophagosome-lysosome fusion. Independent of Syx17/syntaxin 17, HOPS is involved in biosynthetic transport to lysosomes and lysosome-related organelles such as eye-pigment granules. Required for endocytic degradation of boss/bride of sevenless and N/Notch in developing ommatidia. Required for autophagocytosis-dependent remodeling of myofibrils and transverse-tubules (T-tubules) during metamorphosis. In larval neuromuscular junctions, essential for endosomal sorting that traffics old or dysfunctional synaptic vesicle proteins through a degradative endolysosomal route. Required to maintain normal levels of rush, which functions in endosome formation and trafficking. This chain is Vacuolar protein sorting-associated protein 18 homolog, found in Drosophila melanogaster (Fruit fly).